The chain runs to 680 residues: tRNA 5-methylaminomethyl-2-thiouridine biosynthesis bifunctional protein MnmC (680 aa).

Residues 1-245 (MSHPPIQTAT…KREMLTGILP (245 aa)) are tRNA (mnm(5)s(2)U34)-methyltransferase. The segment at 270–680 (IGGGIVSALT…PVQQRVSVLS (411 aa)) is FAD-dependent cmnm(5)s(2)U34 oxidoreductase.

The protein in the N-terminal section; belongs to the methyltransferase superfamily. tRNA (mnm(5)s(2)U34)-methyltransferase family. In the C-terminal section; belongs to the DAO family. FAD serves as cofactor.

The protein resides in the cytoplasm. The enzyme catalyses 5-aminomethyl-2-thiouridine(34) in tRNA + S-adenosyl-L-methionine = 5-methylaminomethyl-2-thiouridine(34) in tRNA + S-adenosyl-L-homocysteine + H(+). Catalyzes the last two steps in the biosynthesis of 5-methylaminomethyl-2-thiouridine (mnm(5)s(2)U) at the wobble position (U34) in tRNA. Catalyzes the FAD-dependent demodification of cmnm(5)s(2)U34 to nm(5)s(2)U34, followed by the transfer of a methyl group from S-adenosyl-L-methionine to nm(5)s(2)U34, to form mnm(5)s(2)U34. This Yersinia enterocolitica serotype O:8 / biotype 1B (strain NCTC 13174 / 8081) protein is tRNA 5-methylaminomethyl-2-thiouridine biosynthesis bifunctional protein MnmC.